A 501-amino-acid polypeptide reads, in one-letter code: Phosphatase and actin regulator 1 (501 aa).

One copy of the RPEL 1 repeat lies at 1 to 18 (MRQSREELIKRGVLKEIF). Disordered regions lie at residues 21-46 (DGELSIPNEEGALENGQPLGSGQVLS) and 295-329 (DNKENVPHEADYEDSSCLYPRQEEEEEEDEDEDNS). Residues 36–46 (GQPLGSGQVLS) show a composition bias toward low complexity. Positions 295–304 (DNKENVPHEA) are enriched in basic and acidic residues. Residues 317 to 328 (EEEEEEDEDEDN) are compositionally biased toward acidic residues. RPEL repeat units follow at residues 343 to 368 (DSLAIKLSNRPSKRELEEKNILPMQT), 381 to 406 (TKLTRRLSQRPTAEELEQRNILKPRN), and 419 to 444 (RRLTRKLSQRPTVEELRERKILIRFS). The tract at residues 382 to 415 (KLTRRLSQRPTAEELEQRNILKPRNEQEEQEEKR) is disordered. Basic and acidic residues predominate over residues 392–415 (TAEELEQRNILKPRNEQEEQEEKR).

It belongs to the phosphatase and actin regulator family. As to quaternary structure, interacts (via RPEL repeats) with ACTA1. In terms of tissue distribution, expressed in the gizzard, and in neurons from central and peripheral nervous systems.

Its subcellular location is the cytoplasm. It localises to the synapse. The protein localises to the nucleus. Binds actin monomers (G actin) and plays a role in the reorganization of the actin cytoskeleton and in formation of actin stress fibers. In Gallus gallus (Chicken), this protein is Phosphatase and actin regulator 1 (PHACTR1).